A 673-amino-acid chain; its full sequence is UvrABC system protein B (673 aa).

One can recognise a Helicase ATP-binding domain in the interval 29 to 188; it reads EGLNDGLAHQ…LAELQYTRND (160 aa). 42–49 lines the ATP pocket; that stretch reads GVTGSGKT. Residues 95–118 carry the Beta-hairpin motif; sequence YYDYYQPEAYVPSSDTFIEKDASI. The Helicase C-terminal domain occupies 434-600; it reads QVDDVLSEIH…ALNKKVGELL (167 aa). The tract at residues 607–632 is disordered; sequence KPKRGKQAVKVEEKSANTYKPKSRKE. One can recognise a UVR domain in the interval 634–669; it reads EKELKQLEQQMRDFAKDLEFEKAAAVRDKIGQLKAV.

It belongs to the UvrB family. In terms of assembly, forms a heterotetramer with UvrA during the search for lesions. Interacts with UvrC in an incision complex.

It localises to the cytoplasm. The UvrABC repair system catalyzes the recognition and processing of DNA lesions. A damage recognition complex composed of 2 UvrA and 2 UvrB subunits scans DNA for abnormalities. Upon binding of the UvrA(2)B(2) complex to a putative damaged site, the DNA wraps around one UvrB monomer. DNA wrap is dependent on ATP binding by UvrB and probably causes local melting of the DNA helix, facilitating insertion of UvrB beta-hairpin between the DNA strands. Then UvrB probes one DNA strand for the presence of a lesion. If a lesion is found the UvrA subunits dissociate and the UvrB-DNA preincision complex is formed. This complex is subsequently bound by UvrC and the second UvrB is released. If no lesion is found, the DNA wraps around the other UvrB subunit that will check the other stand for damage. This is UvrABC system protein B from Actinobacillus pleuropneumoniae serotype 5b (strain L20).